We begin with the raw amino-acid sequence, 141 residues long: Transcription antitermination protein NusB (141 aa).

This sequence belongs to the NusB family.

Involved in transcription antitermination. Required for transcription of ribosomal RNA (rRNA) genes. Binds specifically to the boxA antiterminator sequence of the ribosomal RNA (rrn) operons. The protein is Transcription antitermination protein NusB of Neisseria gonorrhoeae (strain ATCC 700825 / FA 1090).